The primary structure comprises 344 residues: Ubiquitin-associated domain-containing protein 2 (344 aa).

An N-terminal signal peptide occupies residues 1-34; it reads MFTSTGSNGLYKAPLSKSLLLVPSAISILLTLLF. The Extracellular portion of the chain corresponds to 35 to 91; it reads QHYQKFFAYNLQAIKEDFQIWRLVCGRVICLDLKDTFCSSLLIYNFRIFERRYGSRK. Residues 92–111 form a helical membrane-spanning segment; sequence FSSFLLGAWTLSALFDLLLV. Residues 112–123 lie on the Cytoplasmic side of the membrane; the sequence is EAAQYVFGITIN. Residues 124–142 traverse the membrane as a helical segment; sequence SLPSGFLGPVFALFVPFYC. Residues 143–162 are Extracellular-facing; that stretch reads SIPRVQVTQVLGYFSITNKT. A glycan (N-linked (GlcNAc...) asparagine) is linked at Asn-160. A helical membrane pass occupies residues 163–183; sequence LVYILGLQLLTSGSYIWILAL. Over 184-344 the chain is Cytoplasmic; it reads SGLISGICYN…NVATNFLLQH (161 aa). The disordered stretch occupies residues 284-307; the sequence is RHNENYQDHHPSDQDTPPPTEVSE. Residues 286–296 are compositionally biased toward basic and acidic residues; that stretch reads NENYQDHHPSD. The UBA domain maps to 304–344; sequence EVSEEQVARLMEMGFSRGDALEALRASNNDLNVATNFLLQH.

Its subcellular location is the endoplasmic reticulum membrane. Functionally, restricts trafficking of FAF2 from the endoplasmic reticulum to lipid droplets. May negatively regulate the canonical Wnt signaling pathway in the lymphocytes. The sequence is that of Ubiquitin-associated domain-containing protein 2 (UBAC2) from Gallus gallus (Chicken).